The chain runs to 61 residues: Large ribosomal subunit protein uL30 (61 aa).

It belongs to the universal ribosomal protein uL30 family. As to quaternary structure, part of the 50S ribosomal subunit.

This Marinomonas sp. (strain MWYL1) protein is Large ribosomal subunit protein uL30.